Consider the following 1047-residue polypeptide: Isoleucine--tRNA ligase (1047 aa).

Residues 52 to 62 (PTANGMPGAHH) carry the 'HIGH' region motif. The 'KMSKS' region motif lies at 600-604 (KMSKH). K603 is a binding site for ATP.

The protein belongs to the class-I aminoacyl-tRNA synthetase family. IleS type 2 subfamily. In terms of assembly, monomer. Requires Zn(2+) as cofactor.

The protein resides in the cytoplasm. It carries out the reaction tRNA(Ile) + L-isoleucine + ATP = L-isoleucyl-tRNA(Ile) + AMP + diphosphate. In terms of biological role, catalyzes the attachment of isoleucine to tRNA(Ile). As IleRS can inadvertently accommodate and process structurally similar amino acids such as valine, to avoid such errors it has two additional distinct tRNA(Ile)-dependent editing activities. One activity is designated as 'pretransfer' editing and involves the hydrolysis of activated Val-AMP. The other activity is designated 'posttransfer' editing and involves deacylation of mischarged Val-tRNA(Ile). This Streptomyces avermitilis (strain ATCC 31267 / DSM 46492 / JCM 5070 / NBRC 14893 / NCIMB 12804 / NRRL 8165 / MA-4680) protein is Isoleucine--tRNA ligase.